Consider the following 323-residue polypeptide: tRNA dimethylallyltransferase (323 aa).

An ATP-binding site is contributed by 12-19 (GPTAAGKT). 14–19 (TAAGKT) is a substrate binding site. Interaction with substrate tRNA regions lie at residues 37 to 40 (DSAL) and 161 to 165 (QRLMR).

The protein belongs to the IPP transferase family. In terms of assembly, monomer. The cofactor is Mg(2+).

The enzyme catalyses adenosine(37) in tRNA + dimethylallyl diphosphate = N(6)-dimethylallyladenosine(37) in tRNA + diphosphate. Its function is as follows. Catalyzes the transfer of a dimethylallyl group onto the adenine at position 37 in tRNAs that read codons beginning with uridine, leading to the formation of N6-(dimethylallyl)adenosine (i(6)A). In Pseudomonas aeruginosa (strain UCBPP-PA14), this protein is tRNA dimethylallyltransferase.